We begin with the raw amino-acid sequence, 81 residues long: Defensin-like protein 130 (81 aa).

The first 21 residues, 1 to 21 (MTKNTSLTIFMVVLVIGMLYT), serve as a signal peptide directing secretion. Intrachain disulfides connect C32-C81, C41-C63, C46-C75, and C50-C77.

The protein belongs to the DEFL family.

It is found in the secreted. The protein is Defensin-like protein 130 (LCR28) of Arabidopsis thaliana (Mouse-ear cress).